The primary structure comprises 326 residues: ELAV-like protein 1 (326 aa).

3 RRM domains span residues 20–98 (TNLI…VARP), 106–186 (ANLY…FAAN), and 244–322 (WCIF…FKTS).

This sequence belongs to the RRM elav family. Interacts (via RRM3) with cirbp. Unable to form oligomers. Part of a ribonucleoprotein (RNP) complex, at least composed of elavl1/elrA and/or elavl2/elrB, igf2bp3/vg1RBP, ddx6/Xp54, ybx2/frgy2, lsm14b/rap55b and, in a subset of RNP complexes, stau1/staufen.

The protein resides in the cytoplasm. It is found in the cell cortex. Functionally, RNA-binding protein that binds to the 3'-UTR region of mRNAs and increases their stability. Involved in embryonic stem cells (ESCs) differentiation: preferentially binds mRNAs that are not methylated by N6-methyladenosine (m6A), stabilizing them, promoting ESCs differentiation. Binds to poly-U elements and AU-rich elements (AREs) in the 3'-UTR of target mRNAs. Acts cooperatively with cribp to stabilize AU-rich sequence (ARE)-containing mRNAs. May play a role during gastrulation. Required for the vegetal localization of vg1 mRNA. This Xenopus tropicalis (Western clawed frog) protein is ELAV-like protein 1.